Reading from the N-terminus, the 177-residue chain is Endoribonuclease YbeY (177 aa).

Positions 114, 118, and 124 each coordinate Zn(2+). Residues 154–177 form a disordered region; that stretch reads SYPEAIPTNPAPRRQASSSAGHIE. Residues 168–177 are compositionally biased toward polar residues; it reads QASSSAGHIE.

The protein belongs to the endoribonuclease YbeY family. Zn(2+) serves as cofactor.

It localises to the cytoplasm. Functionally, single strand-specific metallo-endoribonuclease involved in late-stage 70S ribosome quality control and in maturation of the 3' terminus of the 16S rRNA. This Cellvibrio japonicus (strain Ueda107) (Pseudomonas fluorescens subsp. cellulosa) protein is Endoribonuclease YbeY.